Consider the following 146-residue polypeptide: Large ribosomal subunit protein uL15 (146 aa).

The segment covering 1–13 has biased composition (basic and acidic residues); that stretch reads MKLHELKPAEGSR. A disordered region spans residues 1–57; that stretch reads MKLHELKPAEGSRKVRNRVGRGTSSGNGKTSGRGQKGQKARSGVGLRPGFEGGQTPL. The segment covering 23-35 has biased composition (gly residues); it reads TSSGNGKTSGRGQ.

Belongs to the universal ribosomal protein uL15 family. Part of the 50S ribosomal subunit.

Functionally, binds to the 23S rRNA. This Streptococcus thermophilus (strain CNRZ 1066) protein is Large ribosomal subunit protein uL15.